We begin with the raw amino-acid sequence, 108 residues long: Thioredoxin C-2 (108 aa).

The 107-residue stretch at 2 to 108 (SATIVNTTDE…KLAAFIDQNI (107 aa)) folds into the Thioredoxin domain. Residues cysteine 33 and cysteine 36 are joined by a disulfide bond.

Belongs to the thioredoxin family.

Functionally, participates in various redox reactions through the reversible oxidation of its active center dithiol to a disulfide and catalyzes dithiol-disulfide exchange reactions. In Corynebacterium nephridii, this protein is Thioredoxin C-2.